The following is an 85-amino-acid chain: Large ribosomal subunit protein bL31B (85 aa).

The protein belongs to the bacterial ribosomal protein bL31 family. Type B subfamily. In terms of assembly, part of the 50S ribosomal subunit.

The sequence is that of Large ribosomal subunit protein bL31B from Staphylococcus epidermidis (strain ATCC 35984 / DSM 28319 / BCRC 17069 / CCUG 31568 / BM 3577 / RP62A).